The following is a 437-amino-acid chain: MEMDIDLDDIENLLPNTFNKYSSSCSDKKGCKTLKSGSKSPSLTIPKLQKQLEFYFSDANLYNDSFLRKLVLKSGEQRVEIETLLMFKKIRSLLKEHYGENYLILKANNDEYIKFICECVKGSRYIRLTKDKLAIKRKKKFDNRTAEELIAFTIRIDGELPSLETIEKAVYNCRNRSSESSDVNKPNKPCKFNGIYVKSFGTNAHCIYIGFLKHRYTECFRDCFSLQQITCFDYSCSSLISLKEAGEMKRRLKKEISKFVDSSVTGINNKNISNEKEEELSQSCFLKISKIPAGSKKYQIREALDCDRPSYIQYDDKETAVIRFKNSAMRTKFLESRNGAEILIKKNCVDIAKESNSKSFVNKYYQSCLIEEIDEATAQKIIKEIKDQRSSIDEIKAELKLDNKKYKPWSKYCGRKRRPVSKRKNKAINKMSTEVKK.

The region spanning 38-145 is the HTH La-type RNA-binding domain; that stretch reads SKSPSLTIPK…KRKKKFDNRT (108 aa). The 119-residue stretch at 279 to 397 folds into the xRRM domain; that stretch reads ELSQSCFLKI…QRSSIDEIKA (119 aa). The segment covering 417-427 has biased composition (basic residues); that stretch reads RRPVSKRKNKA. The disordered stretch occupies residues 417–437; sequence RRPVSKRKNKAINKMSTEVKK.

The protein belongs to the LARP7 family. Component of the telomerase holoenzyme complex composed minimally of the catalytic subunit p123 and the telomerase RNA template component. The mature form of the protein is a protein of 43 kDa, which is derived from a 51 kDa precursor by proteolytic cleavage.

The protein localises to the nucleus. It is found in the chromosome. Its subcellular location is the telomere. RNA-binding protein required for assembly of the holoenzyme telomerase ribonucleoprotein (RNP) complex. Specifically binds telomerase RNA and promotes its assembly with catalytic subunit p123, thereby stimulating enzymatic activity and processivity of p123. Telomerase is a ribonucleoprotein enzyme essential that copies new telomeric repeats onto chromosome ends and functions to maintain cell division. This Euplotes aediculatus (Ciliate) protein is La-related protein 7 homolog.